We begin with the raw amino-acid sequence, 247 residues long: Adenosylcobinamide-GDP ribazoletransferase (247 aa).

Transmembrane regions (helical) follow at residues 31 to 51, 55 to 75, 109 to 129, 135 to 155, 183 to 203, and 227 to 247; these read ILFYPLVGLIIGGILFLVTCI, LPALLLAAIVLALWIWLTGGL, IGVLSLVIICLLKFALVYVLI, LFLICIPILGRVVPSILFLTT, VLLLPLYWGWQGLIAIIGFLI, and AIEIGETVLMFTFVVSYFYLV.

This sequence belongs to the CobS family. It depends on Mg(2+) as a cofactor.

The protein localises to the cell inner membrane. The enzyme catalyses alpha-ribazole + adenosylcob(III)inamide-GDP = adenosylcob(III)alamin + GMP + H(+). The catalysed reaction is alpha-ribazole 5'-phosphate + adenosylcob(III)inamide-GDP = adenosylcob(III)alamin 5'-phosphate + GMP + H(+). Its pathway is cofactor biosynthesis; adenosylcobalamin biosynthesis; adenosylcobalamin from cob(II)yrinate a,c-diamide: step 7/7. Its function is as follows. Joins adenosylcobinamide-GDP and alpha-ribazole to generate adenosylcobalamin (Ado-cobalamin). Also synthesizes adenosylcobalamin 5'-phosphate from adenosylcobinamide-GDP and alpha-ribazole 5'-phosphate. This Acinetobacter baumannii (strain ATCC 17978 / DSM 105126 / CIP 53.77 / LMG 1025 / NCDC KC755 / 5377) protein is Adenosylcobinamide-GDP ribazoletransferase.